The following is a 246-amino-acid chain: Dihydromethanopterin reductase (acceptor) (246 aa).

2 4Fe-4S ferredoxin-type domains span residues 150–178 (LPYAIDKKKCKLCLKCINVCPNGAIVKRD) and 179–208 (NFVEILLSKCLGCGNCKKVCPYNAIIEGKE). 8 residues coordinate [4Fe-4S] cluster: Cys159, Cys162, Cys165, Cys169, Cys188, Cys191, Cys194, and Cys198.

In terms of assembly, homodimer. It depends on [4Fe-4S] cluster as a cofactor.

It catalyses the reaction 5,6,7,8-tetrahydromethanopterin + A = 7,8-dihydromethanopterin + AH2. It functions in the pathway cofactor biosynthesis; 5,6,7,8-tetrahydromethanopterin biosynthesis. Involved in the biosynthesis of tetrahydromethanopterin, a coenzyme used in methanogenesis. Catalyzes the reduction of dihydromethanopterin (H(2)MPT) to tetrahydromethanopterin (H(4)MPT). Ferredoxin may serve as an electron donor. The protein is Dihydromethanopterin reductase (acceptor) of Methanocaldococcus jannaschii (strain ATCC 43067 / DSM 2661 / JAL-1 / JCM 10045 / NBRC 100440) (Methanococcus jannaschii).